A 154-amino-acid chain; its full sequence is Pseudo histidine-containing phosphotransfer protein 6 (154 aa).

Position 1 is an N-acetylmethionine (methionine 1). The HPt domain maps to 41–137; sequence SPNFVYDVIN…HYLKNMMHEL (97 aa).

Interacts with AHK5.

It localises to the cytoplasm. It is found in the cytosol. The protein resides in the nucleus. Functionally, functions as a two-component phosphorelay mediator between cytokinin sensor histidine kinases and response regulators (B-type ARRs). Plays an important role in propagating cytokinin signal transduction. The polypeptide is Pseudo histidine-containing phosphotransfer protein 6 (AHP6) (Arabidopsis thaliana (Mouse-ear cress)).